Consider the following 357-residue polypeptide: Phenylalanine--tRNA ligase alpha subunit (357 aa).

E259 contacts Mg(2+).

This sequence belongs to the class-II aminoacyl-tRNA synthetase family. Phe-tRNA synthetase alpha subunit type 1 subfamily. In terms of assembly, tetramer of two alpha and two beta subunits. The cofactor is Mg(2+).

Its subcellular location is the cytoplasm. It carries out the reaction tRNA(Phe) + L-phenylalanine + ATP = L-phenylalanyl-tRNA(Phe) + AMP + diphosphate + H(+). This Jannaschia sp. (strain CCS1) protein is Phenylalanine--tRNA ligase alpha subunit.